Reading from the N-terminus, the 375-residue chain is Serpentine receptor class alpha-39 (375 aa).

A run of 7 helical transmembrane segments spans residues 17-37 (LFAI…LFII), 51-71 (LVFL…LTAW), 99-119 (IRGT…GILL), 138-158 (LGTI…FILL), 183-203 (VYVM…VHLV), 236-256 (TPLL…VSVF), and 275-295 (LFIM…ELWL).

It belongs to the nematode receptor-like protein sra family.

Its subcellular location is the membrane. This Caenorhabditis elegans protein is Serpentine receptor class alpha-39 (sra-39).